Reading from the N-terminus, the 341-residue chain is HTH-type transcriptional repressor PurR (341 aa).

The HTH lacI-type domain occupies 2-56 (ATIKDVAKRAGVSTTTVSHVINKTRFVADETKAAVWEAIKELHYSPSAVARSLKV). A DNA-binding region (H-T-H motif) is located at residues 4-23 (IKDVAKRAGVSTTTVSHVIN). The DNA-binding element occupies 48 to 56 (SAVARSLKV). Residues tyrosine 73, arginine 190, threonine 192, phenylalanine 221, and aspartate 275 each coordinate hypoxanthine.

As to quaternary structure, homodimer.

It participates in purine metabolism; purine nucleotide biosynthesis [regulation]. Functionally, is the main repressor of the genes involved in the de novo synthesis of purine nucleotides, regulating purB, purC, purEK, purF, purHD, purL, purMN and guaBA expression. PurR is allosterically activated to bind its cognate DNA by binding the purine corepressors, hypoxanthine or guanine, thereby effecting transcription repression. This chain is HTH-type transcriptional repressor PurR, found in Edwardsiella ictaluri (strain 93-146).